We begin with the raw amino-acid sequence, 619 residues long: MAQKVEAQGGNGGNQWDDGSEYDAVTKIQVAAGGNGIEYVKFTYVKNGQTEEAPLRGVKGRSFEADPFVINHPEEHLVSVEGRYNPEGLILGLTFKSNKKTSDLIGYEDGTPFTLQVQDKKIVGFYGFAGNNLHSLGAYFAPLTNVTPLNAKKLEAKGGDTGDIWDDGVYDNVRKVYVGQAQYGIAFVKFEYVNGSQVVVGDEHGKKTELGVEEFEIDADDYIVYVEGYREKVNGMTSEMITFLSFKTYKGKTSQPIEQRPGIKFVLQGGKIVGFHGRSTDVLDSLGAYISLSPTPNLHGKWTKVDENGDGPGLRCSHDIAQVGNKIYSFGGEFTPNQPIDKHLYVFDIESRTWSISPATGDIPTLSCLGVCMVSIGSTLYVFGGRDASRQYNGFYSFDTTTNEWKLLTPVEEGPTPRSFHSMAADEENVYVFGGVSATARLNTLDSYNIVDKKWFHCSTPGDSLTARGGAGLEVVQGKVWVVYGFNGCEVDDVHYYDPVQDKWTQVETFGVRPSERSVFASAALGKHIVIFGGEIAMDPLAHVGPGQLTDGTFALDTETLQWERLDKFGGEEETPSSRGWTASTTATIGGKKGLVMHGGKAPTNDRFDDLFFYGIDSA.

Jacalin-type lectin domains are found at residues alanine 2–proline 142 and alanine 151–leucine 292. Kelch repeat units follow at residues lysine 326 to valine 374, threonine 379 to alanine 425, asparagine 429 to glycine 478, valine 480 to alanine 524, and histidine 528 to alanine 583. Catalysis depends on arginine 386, which acts as the Proton donor. Arginine 386, serine 419, arginine 441, glycine 470, and valine 519 together coordinate a (Z)-N-(sulfonatooxy)alkanimidothioate. Catalysis depends on arginine 441, which acts as the Proton donor. Fe(2+) is bound by residues glutamate 535, aspartate 539, and histidine 543. Tryptophan 581 lines the a (Z)-N-(sulfonatooxy)alkanimidothioate pocket.

It belongs to the jacalin lectin family. Fe(2+) is required as a cofactor. Mainly expressed in roots, and, to a lower extent, in seedlings and leaves. Observed in seeds.

The enzyme catalyses a (Z)-N-(sulfonatooxy)alkanimidothioate = a nitrile + sulfur + sulfate. It carries out the reaction (Z)-phenyl-N-(sulfonatooxy)methanimidothioate = phenylacetonitrile + sulfur + sulfate. The catalysed reaction is (Z)-N-(sulfonatooxy)prop-2-enimidothioate = but-3-enenitrile + sulfur + sulfate. Its function is as follows. Specifier protein that contributes to constitutive and herbivore-induced simple nitrile formation. Promotes simple nitriles, but not epithionitrile or thiocyanate formation. Converts allylglucosinolate and benzylglucosinolate (glucotropaeolin) to their corresponding simple nitriles in the presence of myrosinase. The chain is Thiohydroximate-O-sulfate sulfur/sulfate-lyase (nitrile-forming) NSP4 from Arabidopsis thaliana (Mouse-ear cress).